Consider the following 37-residue polypeptide: uncharacterized protein (37 aa).

Residues 1 to 21 (MQDLEIFLSIFAFIFVFYFGA) traverse the membrane as a helical segment.

The protein localises to the endoplasmic reticulum membrane. This is an uncharacterized protein from Saccharomyces cerevisiae (strain ATCC 204508 / S288c) (Baker's yeast).